A 572-amino-acid polypeptide reads, in one-letter code: Arginine--tRNA ligase (572 aa).

Residues 127 to 137 carry the 'HIGH' region motif; it reads ANPTGPLHVGH.

The protein belongs to the class-I aminoacyl-tRNA synthetase family. In terms of assembly, monomer.

Its subcellular location is the cytoplasm. It carries out the reaction tRNA(Arg) + L-arginine + ATP = L-arginyl-tRNA(Arg) + AMP + diphosphate. The chain is Arginine--tRNA ligase from Vesicomyosocius okutanii subsp. Calyptogena okutanii (strain HA).